We begin with the raw amino-acid sequence, 386 residues long: Acetate kinase (386 aa).

Residue N7 participates in Mg(2+) binding. K14 lines the ATP pocket. Substrate is bound at residue R78. D135 acts as the Proton donor/acceptor in catalysis. ATP-binding positions include 195 to 199 (HLGNG), 268 to 270 (DMR), and 316 to 320 (GIGEN). E370 provides a ligand contact to Mg(2+).

The protein belongs to the acetokinase family. As to quaternary structure, homodimer. The cofactor is Mg(2+). Mn(2+) is required as a cofactor.

Its subcellular location is the cytoplasm. The catalysed reaction is acetate + ATP = acetyl phosphate + ADP. It functions in the pathway metabolic intermediate biosynthesis; acetyl-CoA biosynthesis; acetyl-CoA from acetate: step 1/2. Functionally, catalyzes the formation of acetyl phosphate from acetate and ATP. Can also catalyze the reverse reaction. This chain is Acetate kinase, found in Arthrobacter sp. (strain FB24).